A 102-amino-acid chain; its full sequence is RNA-binding protein Hfq (102 aa).

One can recognise a Sm domain in the interval 9 to 68 (DPFVNALRRERVPVSIYLVNGIKLQGQIESFDQFVILLKNTVSQMVYKHAISTVVPSRPV). Residues 63–102 (VPSRPVSHHSNNAGGGASNNYHHGSNAQGSTAQQDSEETE) are disordered. Positions 70 to 88 (HHSNNAGGGASNNYHHGSN) are enriched in low complexity.

It belongs to the Hfq family. In terms of assembly, homohexamer.

In terms of biological role, RNA chaperone that binds small regulatory RNA (sRNAs) and mRNAs to facilitate mRNA translational regulation in response to envelope stress, environmental stress and changes in metabolite concentrations. Also binds with high specificity to tRNAs. This chain is RNA-binding protein Hfq, found in Salmonella heidelberg (strain SL476).